The chain runs to 166 residues: uncharacterized protein (166 aa).

Residues 73 to 88 show a composition bias toward low complexity; sequence SKLNNNNNSNNNNKMA. Disordered stretches follow at residues 73-101 and 126-166; these read SKLN…EKDK and PQSS…EFNN. A compositionally biased stretch (basic and acidic residues) spans 89 to 101; that stretch reads VDNKDNKDNEKDK. Residues 134 to 154 show a composition bias toward low complexity; that stretch reads SPTHKSPSSSPKTISPVKVSP. Residues 155-166 are compositionally biased toward polar residues; sequence TSSPIKNPEFNN.

This is an uncharacterized protein from Dictyostelium discoideum (Social amoeba).